A 164-amino-acid polypeptide reads, in one-letter code: ATP synthase subunit b 2 (164 aa).

A helical membrane pass occupies residues 4 to 24; it reads TFWAFVGLVLFLALLVYFQIP.

This sequence belongs to the ATPase B chain family. In terms of assembly, F-type ATPases have 2 components, F(1) - the catalytic core - and F(0) - the membrane proton channel. F(1) has five subunits: alpha(3), beta(3), gamma(1), delta(1), epsilon(1). F(0) has three main subunits: a(1), b(2) and c(10-14). The alpha and beta chains form an alternating ring which encloses part of the gamma chain. F(1) is attached to F(0) by a central stalk formed by the gamma and epsilon chains, while a peripheral stalk is formed by the delta and b chains.

It localises to the cell inner membrane. F(1)F(0) ATP synthase produces ATP from ADP in the presence of a proton or sodium gradient. F-type ATPases consist of two structural domains, F(1) containing the extramembraneous catalytic core and F(0) containing the membrane proton channel, linked together by a central stalk and a peripheral stalk. During catalysis, ATP synthesis in the catalytic domain of F(1) is coupled via a rotary mechanism of the central stalk subunits to proton translocation. Functionally, component of the F(0) channel, it forms part of the peripheral stalk, linking F(1) to F(0). The sequence is that of ATP synthase subunit b 2 from Bartonella tribocorum (strain CIP 105476 / IBS 506).